Consider the following 309-residue polypeptide: Low-density lipoprotein receptor-related protein 1 (309 aa).

The protein belongs to the LDLR family.

The protein resides in the endoplasmic reticulum. The protein localises to the golgi apparatus. It is found in the endosome. Involved in endocytosis, fatty acid beta-oxidation and infectious growth. Plays a critical role in the accumulation of MSN2 from the cytosol to the nucleus by activating the cyclic AMP signaling pathway. MSN2 can then target the dienoyl-coenzyme A isomerase DCI1 and other genes involved in fatty acid beta-oxidation, which is important for lipid droplets degradation and infectious growth. The sequence is that of Low-density lipoprotein receptor-related protein 1 from Pyricularia oryzae (strain 70-15 / ATCC MYA-4617 / FGSC 8958) (Rice blast fungus).